Here is a 27-residue protein sequence, read N- to C-terminus: uncharacterized protein (27 aa).

The chain crosses the membrane as a helical span at residues 3–23 (IILWAVLIIFLIGLLVVTGVF).

The protein resides in the cell inner membrane. This is an uncharacterized protein from Escherichia coli (strain K12).